The primary structure comprises 409 residues: Small ribosomal subunit protein mS47 (409 aa).

A mitochondrion-targeting transit peptide spans 1 to 26 (MQTVKALRRVSEPLQWVRSVSYGRRF). The disordered stretch occupies residues 388–409 (ASELDDSDSELKLPTAQREPYF).

This sequence belongs to the enoyl-CoA hydratase/isomerase family. Mitochondrion-specific ribosomal protein mS47 subfamily. As to quaternary structure, component of the mitochondrial ribosome small subunit.

Its subcellular location is the mitochondrion. This is Small ribosomal subunit protein mS47 from Arabidopsis thaliana (Mouse-ear cress).